Here is a 125-residue protein sequence, read N- to C-terminus: Holo-[acyl-carrier-protein] synthase (125 aa).

Mg(2+) contacts are provided by Asp-8 and Glu-57.

This sequence belongs to the P-Pant transferase superfamily. AcpS family. Requires Mg(2+) as cofactor.

It localises to the cytoplasm. It catalyses the reaction apo-[ACP] + CoA = holo-[ACP] + adenosine 3',5'-bisphosphate + H(+). Transfers the 4'-phosphopantetheine moiety from coenzyme A to a Ser of acyl-carrier-protein. In Blochmanniella floridana, this protein is Holo-[acyl-carrier-protein] synthase.